The sequence spans 482 residues: Serine decarboxylase 1 (482 aa).

The interval Glu36–Arg55 is disordered. Substrate is bound at residue His200. The residue at position 312 (Lys312) is an N6-(pyridoxal phosphate)lysine.

Belongs to the group II decarboxylase family. It depends on pyridoxal 5'-phosphate as a cofactor.

It catalyses the reaction L-serine + H(+) = ethanolamine + CO2. Catalyzes the biosynthesis of ethanolamine from serine. Decarboxylation of free serine is the major source of ethanolamine production in plants and ethanolamine metabolism is crucial for the synthesis of choline, phosphatidylethanolamine (PE) and phosphatidylcholine (PC), and thus for plant growth. This is Serine decarboxylase 1 (SDC1) from Oryza sativa subsp. japonica (Rice).